We begin with the raw amino-acid sequence, 604 residues long: Polycomb group protein EMF2B (604 aa).

Residues 310–331 (CPFCLVPCGSFKGLGCHLNASH) form a C2H2-type zinc finger. The disordered stretch occupies residues 396 to 440 (PHIVDSGSPEDAQAGSEDDYVQRENGSSVAHASVDPANSLHGSNL). The segment at 454 to 589 (LSVERADPRN…DARAMNACNT (136 aa)) is VEFS-box.

It belongs to the VEFS (VRN2-EMF2-FIS2-SU(Z)12) family. In terms of assembly, component of the polycomb repressive complex 2 (PRC2), composed of the core PRC2 components FIE2, EZ1 and CLF. PRC2 methylates 'Lys-27' residues of histone H3 (H3K27me3), leading to transcriptional repression of the affected target gene. Widely expressed.

Functionally, polycomb group (PcG) protein. PcG proteins act by forming multiprotein complexes, which are required to maintain the transcriptionally repressive state of homeotic genes throughout development. PcG proteins are not required to initiate repression, but to maintain it during later stages of development. They act via the methylation of histones, rendering chromatin heritably changed in its expressibility. Polycomb group (PcG) protein involved in the repression of flowering under long day (LD) conditions. Regulates floret development. In Oryza sativa subsp. japonica (Rice), this protein is Polycomb group protein EMF2B.